The following is a 304-amino-acid chain: Non-specific ribonucleoside hydrolase RihC (304 aa).

His233 is an active-site residue.

It belongs to the IUNH family. RihC subfamily.

Functionally, hydrolyzes both purine and pyrimidine ribonucleosides with a broad-substrate specificity. This chain is Non-specific ribonucleoside hydrolase RihC, found in Klebsiella pneumoniae (strain 342).